A 511-amino-acid chain; its full sequence is DEP domain-containing protein 7 (511 aa).

The 91-residue stretch at 46 to 136 folds into the DEP domain; it reads LQTQVEVKKR…SSCSLYRFTT (91 aa).

Belongs to the DEPDC7 family. As to expression, expressed in liver.

In Homo sapiens (Human), this protein is DEP domain-containing protein 7 (DEPDC7).